The sequence spans 193 residues: Ribosomal RNA small subunit methyltransferase G (193 aa).

S-adenosyl-L-methionine contacts are provided by residues glycine 61, leucine 66, 112 to 113, and arginine 126; that span reads IE.

The protein belongs to the methyltransferase superfamily. RNA methyltransferase RsmG family.

It is found in the cytoplasm. The enzyme catalyses guanosine(527) in 16S rRNA + S-adenosyl-L-methionine = N(7)-methylguanosine(527) in 16S rRNA + S-adenosyl-L-homocysteine. Its function is as follows. Specifically methylates the N7 position of guanine in position 527 of 16S rRNA. In Paracoccus denitrificans (strain Pd 1222), this protein is Ribosomal RNA small subunit methyltransferase G.